The chain runs to 182 residues: Heat shock protein beta-2 (182 aa).

The region spanning 55-163 is the sHSP domain; it reads RAGEGARAGA…DTEVNEVYIS (109 aa).

The protein belongs to the small heat shock protein (HSP20) family. As to quaternary structure, interacts with DMPK; may enhance its kinase activity.

The protein localises to the cytoplasm. Its subcellular location is the nucleus. In terms of biological role, may regulate the kinase DMPK. In Mus musculus (Mouse), this protein is Heat shock protein beta-2 (Hspb2).